The following is a 151-amino-acid chain: Ubiquitin-conjugating enzyme E2 W (151 aa).

The UBC core domain occupies 3–151; it reads SMQKRLQKEL…TKWWYHDDTC (149 aa). Catalysis depends on C91, which acts as the Glycyl thioester intermediate.

It belongs to the ubiquitin-conjugating enzyme family.

It is found in the nucleus. The catalysed reaction is S-ubiquitinyl-[E1 ubiquitin-activating enzyme]-L-cysteine + [E2 ubiquitin-conjugating enzyme]-L-cysteine = [E1 ubiquitin-activating enzyme]-L-cysteine + S-ubiquitinyl-[E2 ubiquitin-conjugating enzyme]-L-cysteine.. It catalyses the reaction S-ubiquitinyl-[E1 ubiquitin-activating enzyme]-L-cysteine + [acceptor protein]-N-terminal-amino acid = [E1 ubiquitin-activating enzyme]-L-cysteine + N-terminal-ubiquitinyl-[acceptor protein].. It functions in the pathway protein modification; protein ubiquitination. In terms of biological role, accepts ubiquitin from the E1 complex and catalyzes its covalent attachment to other proteins. Catalyzes monoubiquitination. Involved in degradation of misfolded chaperone substrate and DNA repair. In Xenopus tropicalis (Western clawed frog), this protein is Ubiquitin-conjugating enzyme E2 W (ube2w).